We begin with the raw amino-acid sequence, 560 residues long: Dihydroxy-acid dehydratase (560 aa).

Cys-52 serves as a coordination point for [2Fe-2S] cluster. Position 84 (Asp-84) interacts with Mg(2+). Cys-125 contacts [2Fe-2S] cluster. Mg(2+) is bound by residues Asp-126 and Lys-127. Lys-127 carries the post-translational modification N6-carboxylysine. Residue Cys-197 coordinates [2Fe-2S] cluster. Glu-449 provides a ligand contact to Mg(2+). Ser-475 acts as the Proton acceptor in catalysis.

Belongs to the IlvD/Edd family. As to quaternary structure, homodimer. [2Fe-2S] cluster is required as a cofactor. Mg(2+) serves as cofactor.

It carries out the reaction (2R)-2,3-dihydroxy-3-methylbutanoate = 3-methyl-2-oxobutanoate + H2O. The enzyme catalyses (2R,3R)-2,3-dihydroxy-3-methylpentanoate = (S)-3-methyl-2-oxopentanoate + H2O. It participates in amino-acid biosynthesis; L-isoleucine biosynthesis; L-isoleucine from 2-oxobutanoate: step 3/4. The protein operates within amino-acid biosynthesis; L-valine biosynthesis; L-valine from pyruvate: step 3/4. Functionally, functions in the biosynthesis of branched-chain amino acids. Catalyzes the dehydration of (2R,3R)-2,3-dihydroxy-3-methylpentanoate (2,3-dihydroxy-3-methylvalerate) into 2-oxo-3-methylpentanoate (2-oxo-3-methylvalerate) and of (2R)-2,3-dihydroxy-3-methylbutanoate (2,3-dihydroxyisovalerate) into 2-oxo-3-methylbutanoate (2-oxoisovalerate), the penultimate precursor to L-isoleucine and L-valine, respectively. This chain is Dihydroxy-acid dehydratase, found in Sulfurisphaera tokodaii (strain DSM 16993 / JCM 10545 / NBRC 100140 / 7) (Sulfolobus tokodaii).